Reading from the N-terminus, the 238-residue chain is Ribonuclease PH (238 aa).

Residues arginine 86 and 124 to 126 contribute to the phosphate site; that span reads GTR.

The protein belongs to the RNase PH family. Homohexameric ring arranged as a trimer of dimers.

It catalyses the reaction tRNA(n+1) + phosphate = tRNA(n) + a ribonucleoside 5'-diphosphate. Phosphorolytic 3'-5' exoribonuclease that plays an important role in tRNA 3'-end maturation. Removes nucleotide residues following the 3'-CCA terminus of tRNAs; can also add nucleotides to the ends of RNA molecules by using nucleoside diphosphates as substrates, but this may not be physiologically important. Probably plays a role in initiation of 16S rRNA degradation (leading to ribosome degradation) during starvation. This Escherichia coli O6:K15:H31 (strain 536 / UPEC) protein is Ribonuclease PH.